Here is a 386-residue protein sequence, read N- to C-terminus: Chorismate synthase (386 aa).

Positions 32–60 (LPLSEDDVQRELDRRRPGQSGVSTPRSER) are disordered. The segment covering 38-47 (DVQRELDRRR) has biased composition (basic and acidic residues). Arginine 46 serves as a coordination point for NADP(+). FMN contacts are provided by residues 123 to 125 (RAS), glycine 290, 305 to 309 (KPTPS), and arginine 332.

The protein belongs to the chorismate synthase family. It depends on FMNH2 as a cofactor.

It catalyses the reaction 5-O-(1-carboxyvinyl)-3-phosphoshikimate = chorismate + phosphate. The protein operates within metabolic intermediate biosynthesis; chorismate biosynthesis; chorismate from D-erythrose 4-phosphate and phosphoenolpyruvate: step 7/7. Functionally, catalyzes the anti-1,4-elimination of the C-3 phosphate and the C-6 proR hydrogen from 5-enolpyruvylshikimate-3-phosphate (EPSP) to yield chorismate, which is the branch point compound that serves as the starting substrate for the three terminal pathways of aromatic amino acid biosynthesis. This reaction introduces a second double bond into the aromatic ring system. This is Chorismate synthase from Methanopyrus kandleri (strain AV19 / DSM 6324 / JCM 9639 / NBRC 100938).